Consider the following 345-residue polypeptide: UDP-N-acetylenolpyruvoylglucosamine reductase (345 aa).

In terms of domain architecture, FAD-binding PCMH-type spans 15–218 (VDVYAEKVII…NTIIFLRYKK (204 aa)). Arg-161 is a catalytic residue. Catalysis depends on Ser-230, which acts as the Proton donor. The active site involves Glu-327.

The protein belongs to the MurB family. The cofactor is FAD.

It localises to the cytoplasm. It carries out the reaction UDP-N-acetyl-alpha-D-muramate + NADP(+) = UDP-N-acetyl-3-O-(1-carboxyvinyl)-alpha-D-glucosamine + NADPH + H(+). The protein operates within cell wall biogenesis; peptidoglycan biosynthesis. Its function is as follows. Cell wall formation. The chain is UDP-N-acetylenolpyruvoylglucosamine reductase from Blochmanniella floridana.